The primary structure comprises 244 residues: Type III pantothenate kinase (244 aa).

8-15 (DQGNSACK) provides a ligand contact to ATP. Substrate-binding positions include Tyr-88 and 94–97 (GADR). The Proton acceptor role is filled by Asp-96. Asp-117 serves as a coordination point for K(+). Residue Thr-120 coordinates ATP. Residue Thr-175 participates in substrate binding.

Belongs to the type III pantothenate kinase family. In terms of assembly, homodimer. It depends on NH4(+) as a cofactor. K(+) is required as a cofactor.

The protein localises to the cytoplasm. It carries out the reaction (R)-pantothenate + ATP = (R)-4'-phosphopantothenate + ADP + H(+). Its pathway is cofactor biosynthesis; coenzyme A biosynthesis; CoA from (R)-pantothenate: step 1/5. Functionally, catalyzes the phosphorylation of pantothenate (Pan), the first step in CoA biosynthesis. This is Type III pantothenate kinase from Porphyromonas gingivalis (strain ATCC BAA-308 / W83).